A 175-amino-acid polypeptide reads, in one-letter code: Pituitary adenylate cyclase-activating polypeptide (175 aa).

An N-terminal signal peptide occupies residues 1 to 24 (MTMCSGARLALLVYGIIMHSSVSC). The propeptide occupies 25–78 (SPAAGLSFPGIRPEDEAYDQDGNPLQDFYDWDPPGVGSPASALRDAYALYYPAD). The interval 149–157 (VKKYLAAVL) is important for receptor binding. The residue at position 157 (leucine 157) is a Leucine amide. Lysine amide is present on lysine 168. A propeptide spanning residues 172–175 (IAYL) is cleaved from the precursor.

The protein belongs to the glucagon family.

Its subcellular location is the secreted. PACAP is a neuropeptide involved in diverse array of physiological processes through activating the PACAP subfamily of class B1 G protein-coupled receptors: VIP receptor 1 (VIPR1), VIP receptor 2 (VIPR2), and PACAP type I receptor (ADCYAP1R1). Exerts neuroprotective and general cytoprotective effects due to anti-apoptotic, anti-inflammatory, and antioxidant actions. Promotes neuron projection development through the RAPGEF2/Rap1/B-Raf/ERK pathway. In chromaffin cells, induces long-lasting increase of intracellular calcium concentrations and neuroendocrine secretion. Involved in the control of glucose homeostasis, induces insulin secretion by pancreatic beta cells. PACAP exists in two bioactive forms from proteolysis of the same precursor protein, PACAP27 and PACAP38, which differ by eleven amino acid residues in the C-terminus. The protein is Pituitary adenylate cyclase-activating polypeptide of Mus musculus (Mouse).